The following is a 216-amino-acid chain: Uracil phosphoribosyltransferase (216 aa).

5-phospho-alpha-D-ribose 1-diphosphate-binding positions include arginine 85, arginine 110, and 135–143 (DPMVATGYS). Residues isoleucine 200 and 205-207 (GDA) contribute to the uracil site. Aspartate 206 provides a ligand contact to 5-phospho-alpha-D-ribose 1-diphosphate.

Belongs to the UPRTase family. It depends on Mg(2+) as a cofactor.

It catalyses the reaction UMP + diphosphate = 5-phospho-alpha-D-ribose 1-diphosphate + uracil. The protein operates within pyrimidine metabolism; UMP biosynthesis via salvage pathway; UMP from uracil: step 1/1. Its activity is regulated as follows. Allosterically activated by GTP. In terms of biological role, catalyzes the conversion of uracil and 5-phospho-alpha-D-ribose 1-diphosphate (PRPP) to UMP and diphosphate. The chain is Uracil phosphoribosyltransferase from Paraburkholderia phymatum (strain DSM 17167 / CIP 108236 / LMG 21445 / STM815) (Burkholderia phymatum).